Reading from the N-terminus, the 124-residue chain is Fluoride-specific ion channel FluC (124 aa).

The next 4 helical transmembrane spans lie at 5–25 (VYIA…SGLV), 32–52 (SFPY…GLVM), 67–87 (FAIT…SFET), and 96–116 (LLIA…CTWI). Na(+) contacts are provided by Gly-75 and Thr-78.

Belongs to the fluoride channel Fluc/FEX (TC 1.A.43) family.

The protein resides in the cell inner membrane. It catalyses the reaction fluoride(in) = fluoride(out). Its activity is regulated as follows. Na(+) is not transported, but it plays an essential structural role and its presence is essential for fluoride channel function. In terms of biological role, fluoride-specific ion channel. Important for reducing fluoride concentration in the cell, thus reducing its toxicity. The sequence is that of Fluoride-specific ion channel FluC from Geobacter sp. (strain M21).